A 300-amino-acid chain; its full sequence is SNAP25 homologous protein SNAP33 (300 aa).

Disordered regions lie at residues 1–76 and 176–228; these read MFGL…QSLF and WKPK…PESA. Position 29 is a phosphoserine (S29). Residues 38–49 are compositionally biased toward polar residues; that stretch reads TLNPSKRTTSEP. Residues 190-208 are compositionally biased toward basic and acidic residues; that stretch reads TRDDSPTRRVNHLEKREKL. Residues 235–297 form the t-SNARE coiled-coil homology domain; the sequence is EMEKAKQDDG…QQSNQRGRRL (63 aa).

This sequence belongs to the SNAP-25 family. As to quaternary structure, interacts with the cytokinesis-specific syntaxin KNOLLE and with SYP121. Binds to EXO70B2. Ubiquitous, with a strong expression in root tips, ovules, very young leaves, vascular tissue, hydathodes, stipules and the abscission and dehiscence zones of the siliques.

The protein localises to the membrane. T-SNARE involved in diverse vesicle trafficking and membrane fusion processes, including cell plate formation. May function in the secretory pathway. The chain is SNAP25 homologous protein SNAP33 from Arabidopsis thaliana (Mouse-ear cress).